The primary structure comprises 202 residues: Protein cuti-1 (202 aa).

Topologically, residues 1–37 (MPNDRVAPLPPNFVYSPHDKFYYAPATCNSMHYTTAS) are cytoplasmic. The chain crosses the membrane as a helical span at residues 38 to 58 (YISAFIEFLVMGTGAICFYVM). At 59-68 (SHKSDSIGKW) the chain is on the extracellular side. The chain crosses the membrane as a helical span at residues 69–89 (LFYIQAGITVLSLLTSALMAF). The Cytoplasmic portion of the chain corresponds to 90–107 (GLWKENPQMLGSKLKFIE). Residues 108-128 (FIICFLLIWAVISIVCMAFGI) form a helical membrane-spanning segment. Residues 129 to 148 (QFTRQVFGIFGKVHRIEQDY) lie on the Extracellular side of the membrane. A helical transmembrane segment spans residues 149-169 (GPIWPFNIAVVSFFTAAIAIW). Residues 170 to 202 (TRIIIQGAADYLYDKAYFADKQNVELRESSKTR) lie on the Cytoplasmic side of the membrane.

Interacts with vps-39.

The protein resides in the cell membrane. It is found in the cytoplasm. In terms of biological role, involved in cuticle formation and ensures cuticle shedding during larval development. Plays a role in maintaining the hypodermis. In association with vps-39, may play a role in vesicle tethering. This is Protein cuti-1 from Caenorhabditis elegans.